Here is a 365-residue protein sequence, read N- to C-terminus: MTVPENAQHTAPDQTQHTAPDRTRQAQQAAPDTAGRRLIELMAGFWKTQAIYLAAESGLVDAIAAAGRAPAVELANRTGTDPDALGRLLLFLESLDVVSGEDPAGYALTPVGELLRTGTQDSMRDHVRIYGSHFYRAWGALDHSLRTGRSAFTEVYGSDLFRYLNQHPDLSLTYERAMVAGTPFFAQVPEVHDFSGARLIVDVAGGHGALLHEILKSCPEPRAVLFDAPHVIAETADRPIASEHGDRVTLVPGDFFEGVPQGGDVYLLSRILHCFDDEACLRILAHCRSAMAPGGRLVVVERLLTRGTGSSLAQGYNMHMLVVLGGGRERDEDAYRTLLEKAGFQLDSVTTLPLETHLMAATLRR.

Residues methionine 1–threonine 18 show a composition bias toward polar residues. A disordered region spans residues methionine 1 to aspartate 32. S-adenosyl-L-methionine contacts are provided by residues aspartate 227, glycine 253–phenylalanine 255, and arginine 270. Histidine 273 (proton acceptor) is an active-site residue.

It belongs to the class I-like SAM-binding methyltransferase superfamily. Cation-independent O-methyltransferase family.

It carries out the reaction 3-amino-2,4-dihydroxybenzoate + S-adenosyl-L-methionine = 3-amino-2-hydroxy-4-methoxybenzoate + S-adenosyl-L-homocysteine + H(+). It functions in the pathway antibiotic biosynthesis. Its function is as follows. Part of a gene cluster involved in the biosynthesis of cremeomycin, a light-sensitive o-diazoquinone with antibacterial and antiproliferative effects. Catalyzes the methylation of the C4 hydroxyl group of 3-amino-2,4-dihydroxybenzoate (3,2,4-ADHBA) to form 3-amino-2-hydroxy-4-methoxybenzoate (3,2,4-AHMBA). In vitro, can also catalyze the methylation of 3-amino-4-hydroxybenzoate (3,4-AHBA). The polypeptide is 3-amino-4-hydroxybenzoate 4-O-methyltransferase (Streptomyces cremeus).